The chain runs to 115 residues: Promotilin (115 aa).

A signal peptide spans 1 to 25; sequence MVSRKAVAALLVVHVAAMLASQTEA. Positions 39-72 are disordered; sequence QEKERNKGQKKSLSVWQRSGEEGPVDPAEPIREE.

This sequence belongs to the motilin family.

Its subcellular location is the secreted. Functionally, plays an important role in the regulation of interdigestive gastrointestinal motility and indirectly causes rhythmic contraction of duodenal and colonic smooth muscle. The sequence is that of Promotilin (MLN) from Homo sapiens (Human).